Consider the following 363-residue polypeptide: Electron transfer flavoprotein subunit alpha, mitochondrial (363 aa).

A mitochondrion-targeting transit peptide spans 1 to 24; the sequence is MTRTVLLRALTKNKFVASNAPRSI. Residue 303 to 331 participates in FAD binding; sequence LYMAFGVSGAIQHLAGIKDSKVIVAVNKD.

The protein belongs to the ETF alpha-subunit/FixB family. In terms of assembly, heterodimer of an alpha and a beta subunit. FAD is required as a cofactor.

It localises to the mitochondrion matrix. Its function is as follows. The electron transfer flavoprotein serves as a specific electron acceptor for several dehydrogenases, including five acyl-CoA dehydrogenases, glutaryl-CoA and sarcosine dehydrogenase. It transfers the electrons to the main mitochondrial respiratory chain via ETF-ubiquinone oxidoreductase (ETF dehydrogenase). Involved in leucine catabolism and in phytol degradation. The chain is Electron transfer flavoprotein subunit alpha, mitochondrial (ETFA) from Arabidopsis thaliana (Mouse-ear cress).